Here is an 850-residue protein sequence, read N- to C-terminus: Penicillin-binding protein 1A (850 aa).

At 1–5 (MKFVK) the chain is on the cytoplasmic side. Residues 6–26 (YFLILAVCCILLGAGSIYGLY) traverse the membrane as a helical; Signal-anchor for type II membrane protein segment. The Periplasmic segment spans residues 27–850 (RYIEPQLPDV…IDNGEAQELF (824 aa)). Residues 48–216 (MQIYSADGEL…STFNPLYSMD (169 aa)) are transglycosylase. Glu-86 (proton donor; for transglycosylase activity) is an active-site residue. The interval 400–710 (DVLQTGQQIW…GWRAGRDLQR (311 aa)) is transpeptidase. The active-site Acyl-ester intermediate; for transpeptidase activity is the Ser-465.

The protein in the N-terminal section; belongs to the glycosyltransferase 51 family. In the C-terminal section; belongs to the transpeptidase family.

The protein resides in the cell inner membrane. It catalyses the reaction [GlcNAc-(1-&gt;4)-Mur2Ac(oyl-L-Ala-gamma-D-Glu-L-Lys-D-Ala-D-Ala)](n)-di-trans,octa-cis-undecaprenyl diphosphate + beta-D-GlcNAc-(1-&gt;4)-Mur2Ac(oyl-L-Ala-gamma-D-Glu-L-Lys-D-Ala-D-Ala)-di-trans,octa-cis-undecaprenyl diphosphate = [GlcNAc-(1-&gt;4)-Mur2Ac(oyl-L-Ala-gamma-D-Glu-L-Lys-D-Ala-D-Ala)](n+1)-di-trans,octa-cis-undecaprenyl diphosphate + di-trans,octa-cis-undecaprenyl diphosphate + H(+). The catalysed reaction is Preferential cleavage: (Ac)2-L-Lys-D-Ala-|-D-Ala. Also transpeptidation of peptidyl-alanyl moieties that are N-acyl substituents of D-alanine.. Its pathway is cell wall biogenesis; peptidoglycan biosynthesis. Cell wall formation. Synthesis of cross-linked peptidoglycan from the lipid intermediates. The enzyme has a penicillin-insensitive transglycosylase N-terminal domain (formation of linear glycan strands) and a penicillin-sensitive transpeptidase C-terminal domain (cross-linking of the peptide subunits). The polypeptide is Penicillin-binding protein 1A (mrcA) (Escherichia coli (strain K12)).